A 304-amino-acid chain; its full sequence is Putative S-adenosyl-L-methionine-dependent methyltransferase MAV_4236 (304 aa).

Residues D129 and D158–L159 each bind S-adenosyl-L-methionine.

The protein belongs to the UPF0677 family.

In terms of biological role, exhibits S-adenosyl-L-methionine-dependent methyltransferase activity. The protein is Putative S-adenosyl-L-methionine-dependent methyltransferase MAV_4236 of Mycobacterium avium (strain 104).